The following is a 124-amino-acid chain: MYKLASCCLLFIGFLNPLLSLPLLDSREISFQLSAPHEDARLTPEELERASLLQILPEMLGAERGDILRKADSSTNIFNPRGNLRKFQDFSGQDPNILLSHLLARIWKPYKKRETPDCFWKYCV.

A signal peptide spans 1-20 (MYKLASCCLLFIGFLNPLLS). The propeptide occupies 21-110 (LPLLDSREIS…HLLARIWKPY (90 aa)). An intrachain disulfide couples Cys-118 to Cys-123.

The protein belongs to the urotensin-2 family. As to expression, brain specific.

The protein localises to the secreted. Functionally, highly potent vasoconstrictor. The polypeptide is Urotensin-2 (UTS2) (Homo sapiens (Human)).